Consider the following 398-residue polypeptide: FK506-binding protein 4 (398 aa).

3 disordered regions span residues 66-120 (EVDE…DEYE), 164-232 (VKHP…QLAK), and 245-288 (DLIA…KKNK). Positions 170–228 (EPLEDLYSDEDSEEYSDDELDQEIEEDDELDHDEASSEESDEDQEFYDAISEGDEDIDE) are enriched in acidic residues. A compositionally biased stretch (basic and acidic residues) spans 264–287 (PETKKSKKTKDEKNTKATENEKKN). One can recognise a PPIase FKBP-type domain in the interval 312–398 (GSKVGMRYIG…TFDVKLVSLK (87 aa)).

This sequence belongs to the FKBP-type PPIase family. FKBP3/4 subfamily. Binds to histones H3 and H4.

The protein resides in the nucleus. It catalyses the reaction [protein]-peptidylproline (omega=180) = [protein]-peptidylproline (omega=0). With respect to regulation, inhibited by both FK506 and rapamycin. In terms of biological role, PPIase that acts as a histone chaperone. Histone proline isomerase that increases the rate of cis-trans isomerization at prolines on the histone H3 N-terminal tail. Proline isomerization influences H3 methylation thereby regulating gene expression. This chain is FK506-binding protein 4 (FPR4), found in Candida glabrata (strain ATCC 2001 / BCRC 20586 / JCM 3761 / NBRC 0622 / NRRL Y-65 / CBS 138) (Yeast).